The chain runs to 648 residues: DNA gyrase subunit B (648 aa).

The region spanning 427–541 (TELFIVEGDS…AGYVYIAQPP (115 aa)) is the Toprim domain. Mg(2+)-binding residues include E433, D506, and D508.

It belongs to the type II topoisomerase GyrB family. Heterotetramer, composed of two GyrA and two GyrB chains. In the heterotetramer, GyrA contains the active site tyrosine that forms a transient covalent intermediate with DNA, while GyrB binds cofactors and catalyzes ATP hydrolysis. It depends on Mg(2+) as a cofactor. Mn(2+) serves as cofactor. Requires Ca(2+) as cofactor.

The protein resides in the cytoplasm. It carries out the reaction ATP-dependent breakage, passage and rejoining of double-stranded DNA.. A type II topoisomerase that negatively supercoils closed circular double-stranded (ds) DNA in an ATP-dependent manner to modulate DNA topology and maintain chromosomes in an underwound state. Negative supercoiling favors strand separation, and DNA replication, transcription, recombination and repair, all of which involve strand separation. Also able to catalyze the interconversion of other topological isomers of dsDNA rings, including catenanes and knotted rings. Type II topoisomerases break and join 2 DNA strands simultaneously in an ATP-dependent manner. The polypeptide is DNA gyrase subunit B (Streptococcus pneumoniae serotype 4 (strain ATCC BAA-334 / TIGR4)).